The sequence spans 1003 residues: Glutamate receptor ionotropic, NMDA 3B (1003 aa).

A signal peptide spans 1–24 (MECVQTLWLSLALALARGSWVVRG). Residues 25–574 (HPQPCGVPTR…PIGAFMWPLH (550 aa)) are Extracellular-facing. Asn-69, Asn-212, Asn-344, Asn-451, and Asn-465 each carry an N-linked (GlcNAc...) asparagine glycan. Intrachain disulfides connect Cys-439/Cys-475 and Cys-445/Cys-476. 3 residues coordinate glycine: Ser-531, Ser-533, and Arg-538. Residues Ser-533 and Arg-538 each contribute to the D-serine site. A helical membrane pass occupies residues 575–594 (WSMWVGVFAALHLTALFLTL). Topologically, residues 595–615 (YEWRSPYGLTPRGRNRGTVFS) are cytoplasmic. The segment at residues 616–627 (YSSALNLCYAIL) is an intramembrane region (discontinuously helical). Residues 628–641 (FGRTVSSKTPKCPT) lie on the Cytoplasmic side of the membrane. Residues 642-661 (GRFLMNLWAIFCLLVLSSYT) traverse the membrane as a helical segment. The Extracellular portion of the chain corresponds to 662–832 (ANLAAVMVGD…TLQMGVYHLS (171 aa)). Ser-701 provides a ligand contact to glycine. 3 residues coordinate D-serine: Ser-701, Ala-702, and Asp-745. Position 745 (Asp-745) interacts with glycine. The N-linked (GlcNAc...) asparagine glycan is linked to Asn-786. A helical transmembrane segment spans residues 833–848 (GLFVLLCLGLGSALLT). The Cytoplasmic segment spans residues 849–1003 (SLGEHVFYRL…RLLHAAPAES (155 aa)). Residues 883 to 912 (LNTGPPEGQQERAEQECSGPKEEQPAADGA) are disordered. The segment covering 891 to 906 (QQERAEQECSGPKEEQ) has biased composition (basic and acidic residues). A coiled-coil region spans residues 947–986 (SNGPGVQAELRELELRIEAARERLRSALLRRGELRAQLGD). The segment at 952–985 (VQAELRELELRIEAARERLRSALLRRGELRAQLG) is involved in the trafficking and surface expression of NMDARs.

The protein belongs to the glutamate-gated ion channel (TC 1.A.10.1) family. NR3B/GRIN3B subfamily. Forms heterotetrameric channels that contain at least two GluN1 subunits and at least a combination of one GluN2 and one GluN3 subunits (in vitro). Forms heterotetrameric channels composed of two GluN1/zeta subunits (GRIN1), and two identical GluN3 subunits (GRIN3A or GRIN3B) (in vitro). Does not form functional homomeric channels. Expressed in the facial nucleus and the ambiguus nucleus of the brainstem, pons, medulla, spinal cord and cerebellum.

Its subcellular location is the cell membrane. It is found in the postsynaptic cell membrane. It carries out the reaction Ca(2+)(in) = Ca(2+)(out). The enzyme catalyses Na(+)(in) = Na(+)(out). Component of a non-conventional N-methyl-D-aspartate (NMDA) receptors (NMDARs) that function as heterotetrameric, ligand-gated cation channels with low calcium permeability and low voltage-dependent block by Mg(2+). Forms glutamatergic receptor complexes with GluN1 and GluN2 subunits which are activated by glycine binding to the GluN1 and GluN3 subunits and L-glutamate binding to GluN2 subunits. Forms excitatory glycinergic receptor complexes with GluN1 alone which are activated by glycine binding to the GluN1 and GluN3 subunits. GluN3B subunit also binds D-serine and, in the absence of glycine, activates glycinergic receptor complexes, but with lower efficacy than glycine. Each GluN3 subunit confers differential attributes to channel properties, including activation, deactivation and desensitization kinetics, pH sensitivity, Ca2(+) permeability, and binding to allosteric modulators. This Mus musculus (Mouse) protein is Glutamate receptor ionotropic, NMDA 3B.